Here is a 307-residue protein sequence, read N- to C-terminus: Protoheme IX farnesyltransferase (307 aa).

A run of 9 helical transmembrane segments spans residues Ile-33–Phe-53, Leu-62–Ile-82, Arg-111–Thr-131, Val-132–Trp-152, Leu-159–Val-179, Ile-185–Leu-205, Met-229–Phe-249, Leu-251–Leu-271, and Phe-287–Trp-307.

This sequence belongs to the UbiA prenyltransferase family. Protoheme IX farnesyltransferase subfamily. Interacts with CtaA.

The protein resides in the cell membrane. It catalyses the reaction heme b + (2E,6E)-farnesyl diphosphate + H2O = Fe(II)-heme o + diphosphate. It participates in porphyrin-containing compound metabolism; heme O biosynthesis; heme O from protoheme: step 1/1. In terms of biological role, converts heme B (protoheme IX) to heme O by substitution of the vinyl group on carbon 2 of heme B porphyrin ring with a hydroxyethyl farnesyl side group. This chain is Protoheme IX farnesyltransferase, found in Geobacillus thermodenitrificans (strain NG80-2).